The following is a 198-amino-acid chain: MNHLDRIGVILAGGKSTRFGRPKAMVQYQERYFYEASLDALQHHTDQVLIISHPTLTNQFRRNEGIRVIEDDPRYQGCGPLAGIFTAIEKESAYWYLTAPCDTPFLKKEIYDILFSYLDQEPDKKAVIPVVNGRKQPLIGLYHRSCLAPIQSLLEQQRYKVGFLFQLVDTLFVEDKAFEQLHSSFVNINRPEDLSEWT.

Residues 11–13 (LAG), Lys-23, Asp-71, and Asp-102 each bind GTP. Asp-102 is a Mg(2+) binding site.

The protein belongs to the MobA family. Mg(2+) serves as cofactor.

The protein resides in the cytoplasm. The enzyme catalyses Mo-molybdopterin + GTP + H(+) = Mo-molybdopterin guanine dinucleotide + diphosphate. Its function is as follows. Transfers a GMP moiety from GTP to Mo-molybdopterin (Mo-MPT) cofactor (Moco or molybdenum cofactor) to form Mo-molybdopterin guanine dinucleotide (Mo-MGD) cofactor. The sequence is that of Probable molybdenum cofactor guanylyltransferase from Halalkalibacterium halodurans (strain ATCC BAA-125 / DSM 18197 / FERM 7344 / JCM 9153 / C-125) (Bacillus halodurans).